Reading from the N-terminus, the 312-residue chain is Calcium-independent mitochondrial carrier protein SCaMC-3L (312 aa).

3 Solcar repeats span residues 27–113 (GTLW…SKNF), 121–206 (QLFQ…LQCL), and 217–304 (PSGL…MKKT). 6 helical membrane-spanning segments follow: residues 33–50 (LLSGAMAGAVSRTGTAPL), 88–107 (GNGINVLKIAPEYAIKFSVC), 131–144 (SLAVAVSQTLINPM), 182–200 (YLPNMLGIIPYACTDLAVY), 219–243 (GLVSLSSVTLSTTCGQMASYPLTLV), and 279–298 (GMTPTLLKVLPAGGISYLVY).

It belongs to the mitochondrial carrier (TC 2.A.29) family. Mainly expressed in testis and at lesser levels in brain.

Its subcellular location is the mitochondrion inner membrane. It catalyses the reaction Mg(2+)(out) + phosphate(in) + ATP(out) = Mg(2+)(in) + phosphate(out) + ATP(in). The catalysed reaction is ADP(out) + phosphate(in) + H(+)(out) = ADP(in) + phosphate(out) + H(+)(in). Calcium-independent ATP-Mg/Pi exchanger that catalyzes the electroneutral exchange of Mg-ATP or free ADP against an hydrogenphosphate and participates in the net transport of adenine nucleotides across the mitochondria inner membrane. The sequence is that of Calcium-independent mitochondrial carrier protein SCaMC-3L from Mus musculus (Mouse).